A 128-amino-acid chain; its full sequence is Large-conductance mechanosensitive channel (128 aa).

2 consecutive transmembrane segments (helical) span residues 11-31 and 70-90; these read FALKGNVLDLAVAVVIGAAFG and GAFIQSIVDFVIIAFAIFIFV.

Belongs to the MscL family. As to quaternary structure, homopentamer.

Its subcellular location is the cell membrane. Its function is as follows. Channel that opens in response to stretch forces in the membrane lipid bilayer. May participate in the regulation of osmotic pressure changes within the cell. This chain is Large-conductance mechanosensitive channel, found in Listeria innocua serovar 6a (strain ATCC BAA-680 / CLIP 11262).